Reading from the N-terminus, the 210-residue chain is WASH complex subunit 3 (210 aa).

The stretch at Glu-49 to Leu-73 forms a coiled coil. Positions Leu-173 to Asp-210 are disordered. The segment covering Asp-195–Ser-204 has biased composition (acidic residues).

This sequence belongs to the CCDC53 family. In terms of assembly, component of the WASH complex.

The sequence is that of WASH complex subunit 3 from Salmo salar (Atlantic salmon).